The following is a 407-amino-acid chain: Digeranylgeranylglycerophospholipid reductase (407 aa).

Positions 15, 34, 45, 46, 48, 99, 123, 281, 293, and 294 each coordinate FAD.

The protein belongs to the geranylgeranyl reductase family. DGGGPL reductase subfamily. FAD serves as cofactor.

It carries out the reaction a 2,3-bis-O-phytanyl-sn-glycerol 1-phospholipid + 8 oxidized 2[4Fe-4S]-[ferredoxin] = a 2,3-bis-O-(geranylgeranyl)-sn-glycerol 1-phospholipid + 8 reduced 2[4Fe-4S]-[ferredoxin] + 16 H(+). The catalysed reaction is 2,3-bis-O-(phytanyl)-sn-glycerol 1-phosphate + 8 oxidized 2[4Fe-4S]-[ferredoxin] = 2,3-bis-O-(geranylgeranyl)-sn-glycerol 1-phosphate + 8 reduced 2[4Fe-4S]-[ferredoxin] + 16 H(+). The enzyme catalyses a 2,3-bis-O-phytanyl-sn-glycerol 1-phospholipid + 8 A = a 2,3-bis-O-(geranylgeranyl)-sn-glycerol 1-phospholipid + 8 AH2. It catalyses the reaction CDP-2,3-bis-O-(geranylgeranyl)-sn-glycerol + 8 AH2 = CDP-2,3-bis-O-(phytanyl)-sn-glycerol + 8 A. It carries out the reaction archaetidylserine + 8 AH2 = 2,3-bis-O-phytanyl-sn-glycero-3-phospho-L-serine + 8 A. It participates in membrane lipid metabolism; glycerophospholipid metabolism. Its function is as follows. Is involved in the reduction of 2,3-digeranylgeranylglycerophospholipids (unsaturated archaeols) into 2,3-diphytanylglycerophospholipids (saturated archaeols) in the biosynthesis of archaeal membrane lipids. Catalyzes the formation of archaetidic acid (2,3-di-O-phytanyl-sn-glyceryl phosphate) from 2,3-di-O-geranylgeranylglyceryl phosphate (DGGGP) via the hydrogenation of each double bond of the isoprenoid chains. Is also probably able to reduce double bonds of geranyl groups in CDP-2,3-bis-O-(geranylgeranyl)-sn-glycerol and archaetidylserine, thus acting at various stages in the biosynthesis of archaeal membrane lipids. The chain is Digeranylgeranylglycerophospholipid reductase from Methanosarcina mazei (strain ATCC BAA-159 / DSM 3647 / Goe1 / Go1 / JCM 11833 / OCM 88) (Methanosarcina frisia).